The chain runs to 403 residues: Phosphoglycerate kinase (403 aa).

Substrate contacts are provided by residues 21 to 23, Arg36, 59 to 62, Arg119, and Arg159; these read DFN and HLGR. ATP is bound by residues Lys214, Gly301, Glu332, and 359-362; that span reads GGDS.

The protein belongs to the phosphoglycerate kinase family. Monomer.

It localises to the cytoplasm. The catalysed reaction is (2R)-3-phosphoglycerate + ATP = (2R)-3-phospho-glyceroyl phosphate + ADP. The protein operates within carbohydrate degradation; glycolysis; pyruvate from D-glyceraldehyde 3-phosphate: step 2/5. The polypeptide is Phosphoglycerate kinase (Lactobacillus johnsonii (strain CNCM I-12250 / La1 / NCC 533)).